The primary structure comprises 244 residues: 7-cyano-7-deazaguanine synthase (244 aa).

17–27 (FSGGQDSTTCL) provides a ligand contact to ATP. Residues Cys205, Cys220, Cys223, and Cys226 each contribute to the Zn(2+) site.

It belongs to the QueC family. Zn(2+) is required as a cofactor.

It catalyses the reaction 7-carboxy-7-deazaguanine + NH4(+) + ATP = 7-cyano-7-deazaguanine + ADP + phosphate + H2O + H(+). It functions in the pathway purine metabolism; 7-cyano-7-deazaguanine biosynthesis. Catalyzes the ATP-dependent conversion of 7-carboxy-7-deazaguanine (CDG) to 7-cyano-7-deazaguanine (preQ(0)). The polypeptide is 7-cyano-7-deazaguanine synthase (Bordetella parapertussis (strain 12822 / ATCC BAA-587 / NCTC 13253)).